The following is a 318-amino-acid chain: NADH-ubiquinone oxidoreductase chain 1 (318 aa).

8 helical membrane passes run 2-22, 76-96, 100-120, 146-166, 171-191, 222-242, 253-273, and 294-314; these read PMIN…FLML, ALAL…IPLI, LGLL…LWSG, LALI…SALI, HSWL…STLA, LFFM…TMIF, ELYT…FLWI, and LPLT…TSGI.

The protein belongs to the complex I subunit 1 family. As to quaternary structure, core subunit of respiratory chain NADH dehydrogenase (Complex I) which is composed of 45 different subunits.

It is found in the mitochondrion inner membrane. It catalyses the reaction a ubiquinone + NADH + 5 H(+)(in) = a ubiquinol + NAD(+) + 4 H(+)(out). In terms of biological role, core subunit of the mitochondrial membrane respiratory chain NADH dehydrogenase (Complex I) which catalyzes electron transfer from NADH through the respiratory chain, using ubiquinone as an electron acceptor. Essential for the catalytic activity and assembly of complex I. In Pongo abelii (Sumatran orangutan), this protein is NADH-ubiquinone oxidoreductase chain 1 (MT-ND1).